The primary structure comprises 496 residues: MARTLQLSLTALLLLPMAIAMHSDCIFKKEQAMCLERIQRANDLMGLNESSPGCPGMWDNITCWKPAQIGEMVLVSCPEVFRIFNPDQVWMTETIGDSGFADSNSLEITDMGVVGRNCTEDGWSEPFPHYFDACGFDDYEPESGDQDYYYLSVKALYTVGYSTSLVTLTTAMVILCRFRKLHCTRNFIHMNLFVSFMLRAISVFIKDWILYAEQDSSHCFVSTVECKAVMVFFHYCVVSNYFWLFIEGLYLFTLLVETFFPERRYFYWYTIIGWGTPTVCVTVWAVLRLYFDDAGCWDMNDSTALWWVIKGPVVGSIMVNFVLFIGIIIILVQKLQSPDMGGNESSIYFSCVQKCYCKPQRAQQHSCKMSELSTITLRLARSTLLLIPLFGIHYTVFAFSPENVSKRERLVFELGLGSFQGFVVAVLYCFLNGEVQAEIKRKWRSWKVNRYFTMDFKHRHPSLASSGVNGGTQLSILSKSSSQLRMSSLPADNLAT.

An N-terminal signal peptide occupies residues 1-20 (MARTLQLSLTALLLLPMAIA). Over 21–152 (MHSDCIFKKE…SGDQDYYYLS (132 aa)) the chain is Extracellular. 3 disulfide bridges follow: cysteine 34–cysteine 63, cysteine 54–cysteine 118, and cysteine 77–cysteine 134. N-linked (GlcNAc...) asparagine glycosylation is found at asparagine 48, asparagine 60, and asparagine 117. The interval 125–139 (EPFPHYFDACGFDDY) is important for ADCYAP1/PACAP ligand binding and specificity. The important for ligand binding and specificity stretch occupies residues 125–139 (EPFPHYFDACGFDDY). The helical transmembrane segment at 153-177 (VKALYTVGYSTSLVTLTTAMVILCR) threads the bilayer. The Cytoplasmic portion of the chain corresponds to 178–187 (FRKLHCTRNF). Residues 188–208 (IHMNLFVSFMLRAISVFIKDW) form a helical membrane-spanning segment. Residues 209–223 (ILYAEQDSSHCFVST) are Extracellular-facing. The chain crosses the membrane as a helical span at residues 224 to 249 (VECKAVMVFFHYCVVSNYFWLFIEGL). A disulfide bridge links cysteine 226 with cysteine 296. The Cytoplasmic segment spans residues 250 to 267 (YLFTLLVETFFPERRYFY). A helical membrane pass occupies residues 268–290 (WYTIIGWGTPTVCVTVWAVLRLY). At 291–302 (FDDAGCWDMNDS) the chain is on the extracellular side. Residues 303–329 (TALWWVIKGPVVGSIMVNFVLFIGIII) form a helical membrane-spanning segment. The Cytoplasmic segment spans residues 330–347 (ILVQKLQSPDMGGNESSI). Residues 348–402 (YFSCVQKCYCKPQRAQQHSCKMSELSTITLRLARSTLLLIPLFGIHYTVFAFSPE) form a helical membrane-spanning segment. Over 403–407 (NVSKR) the chain is Extracellular. The helical transmembrane segment at 408-431 (ERLVFELGLGSFQGFVVAVLYCFL) threads the bilayer. The Cytoplasmic portion of the chain corresponds to 432–496 (NGEVQAEIKR…SSLPADNLAT (65 aa)). A phosphoserine mark is found at serine 462 and serine 475.

Belongs to the G-protein coupled receptor 2 family. As to quaternary structure, interacts with maxadilan, a vasodilator peptide from Lutzomyia longipalpis saliva; the interaction results in ADCYAP1R1 activation.

It is found in the cell membrane. In terms of biological role, g protein-coupled receptor activated by the neuropeptide pituitary adenylate cyclase-activating polypeptide (ADCYAP1/PACAP). Binds both PACAP27 and PACAP38 bioactive peptides. Ligand binding causes a conformation change that triggers signaling via guanine nucleotide-binding proteins (G proteins) and modulates the activity of downstream effectors. Activates cAMP-dependent pathway. May regulate the release of adrenocorticotropin, luteinizing hormone, growth hormone, prolactin, epinephrine, and catecholamine. May play a role in spermatogenesis and sperm motility. Causes smooth muscle relaxation and secretion in the gastrointestinal tract. This is Pituitary adenylate cyclase-activating polypeptide type I receptor from Mus musculus (Mouse).